The following is a 105-amino-acid chain: MDKKDLFDALDDFSQTLLVTLAEVEAVKKNLKSVVEENIALHLENDKLRERLGEVEKETPTKTKKNRDNLRKLYYDGFHVCTDFYGQRRENDAECMFCDELLFRE.

Zn(2+) is bound by residues His-79, Cys-81, Cys-95, and Cys-98.

This sequence belongs to the YabA family. Homotetramer. Interacts with both DnaA and DnaN, acting as a bridge between these two proteins. Zn(2+) is required as a cofactor.

It localises to the cytoplasm. It is found in the nucleoid. In terms of biological role, involved in control of chromosome replication initiation. Inhibits the cooperative binding of DnaA to the oriC region, thus negatively regulating initiation of chromosome replication. Inhibits the ability of DnaA-ATP to form a helix on DNA; does not disassemble preformed DnaA-DNA helices. Decreases the residence time of DnaA on the chromosome at its binding sites (oriC, replication forks and promoter-binding sites). Tethers DnaA to the replication machinery via the DNA polymerase beta sliding clamp subunit (dnaN). Associates with oriC and other DnaA targets on the chromosome in a DnaA-dependent manner. The sequence is that of Replication initiation control protein YabA from Streptococcus sanguinis (strain SK36).